We begin with the raw amino-acid sequence, 478 residues long: Lysosome membrane protein 2 (478 aa).

Over 2–4 the chain is Cytoplasmic; it reads ARC. The helical transmembrane segment at 5 to 27 threads the bilayer; it reads CFYTAGTLSLLLLVTSVTLLVAR. Residues 28 to 433 are Lumenal-facing; it reads VFQKAVDQTI…QLKSVINTTL (406 aa). Asn45, Asn68, Asn105, and Asn122 each carry an N-linked (GlcNAc...) asparagine glycan. Residues 155 to 191 form an important for interaction with GBA1 region; sequence IIEAMLKAYQQTLFVTHTVHELLWGYKDEVLSLVHIF. N-linked (GlcNAc...) asparagine glycosylation is found at Asn206, Asn224, Asn249, and Asn304. 2 cysteine pairs are disulfide-bonded: Cys274–Cys329 and Cys312–Cys318. Residues Asn325, Asn412, and Asn430 are each glycosylated (N-linked (GlcNAc...) asparagine). Residues 434–459 traverse the membrane as a helical segment; that stretch reads IVTNIPYIIMALGVFFGLIFTWLACR. Residues 460–478 are Cytoplasmic-facing; sequence GQGSTDEGTADERAPLIRT.

Belongs to the CD36 family. As to quaternary structure, interacts with GBA1. Acylated by palmitic acid group(s).

Its subcellular location is the lysosome membrane. Its function is as follows. Acts as a lysosomal receptor for glucosylceramidase (GBA1) targeting. This Rattus norvegicus (Rat) protein is Lysosome membrane protein 2 (Scarb2).